A 56-amino-acid chain; its full sequence is Large ribosomal subunit protein bL33 (56 aa).

The protein belongs to the bacterial ribosomal protein bL33 family.

The protein is Large ribosomal subunit protein bL33 of Acidovorax sp. (strain JS42).